The following is a 642-amino-acid chain: Bifunctional protein glk (642 aa).

The tract at residues 1-340 (MSTGAQSKAV…QLSNRSGGAS (340 aa)) is glucokinase. ATP is bound at residue 23–28 (ADVGGT). The 77-residue stretch at 341–417 (SAVFERIRQM…LKLATGLTGT (77 aa)) folds into the HTH rpiR-type domain. The tract at residues 341-642 (SAVFERIRQM…SPAAKDVARD (302 aa)) is putative HTH-type transcriptional regulator. The H-T-H motif DNA-binding region spans 377–396 (IVDIARKADVSQPTVIRFCR). Residues 461–600 (AIEILNGARR…AVGVAIRRAS (140 aa)) form the SIS domain. The chain crosses the membrane as a helical span at residues 576 to 596 (SMISRILHLLMIDILAVGVAI).

The protein in the N-terminal section; belongs to the bacterial glucokinase family.

The protein resides in the membrane. It catalyses the reaction D-glucose + ATP = D-glucose 6-phosphate + ADP + H(+). The sequence is that of Bifunctional protein glk (glk) from Burkholderia orbicola (strain AU 1054).